The primary structure comprises 510 residues: Maturase K (510 aa).

The protein belongs to the intron maturase 2 family. MatK subfamily.

It is found in the plastid. It localises to the chloroplast. Its function is as follows. Usually encoded in the trnK tRNA gene intron. Probably assists in splicing its own and other chloroplast group II introns. The chain is Maturase K from Taxus cuspidata (Japanese yew).